A 104-amino-acid polypeptide reads, in one-letter code: Large ribosomal subunit protein uL24 (104 aa).

Belongs to the universal ribosomal protein uL24 family. In terms of assembly, part of the 50S ribosomal subunit.

Its function is as follows. One of two assembly initiator proteins, it binds directly to the 5'-end of the 23S rRNA, where it nucleates assembly of the 50S subunit. In terms of biological role, one of the proteins that surrounds the polypeptide exit tunnel on the outside of the subunit. This is Large ribosomal subunit protein uL24 from Pseudomonas fluorescens (strain SBW25).